The primary structure comprises 71 residues: Mitotic-spindle organizing protein 1 (71 aa).

This sequence belongs to the MOZART1 family. In terms of assembly, part of the gamma-tubulin complex.

It localises to the cytoplasm. The protein localises to the cytoskeleton. The protein resides in the microtubule organizing center. It is found in the spindle pole body. Its function is as follows. Required for gamma-tubulin complex recruitment to the microtubule organizing center (MTOC). The protein is Mitotic-spindle organizing protein 1 of Aspergillus clavatus (strain ATCC 1007 / CBS 513.65 / DSM 816 / NCTC 3887 / NRRL 1 / QM 1276 / 107).